The sequence spans 152 residues: Protein-export protein SecB (152 aa).

It belongs to the SecB family. As to quaternary structure, homotetramer, a dimer of dimers. One homotetramer interacts with 1 SecA dimer.

The protein localises to the cytoplasm. Its function is as follows. One of the proteins required for the normal export of preproteins out of the cell cytoplasm. It is a molecular chaperone that binds to a subset of precursor proteins, maintaining them in a translocation-competent state. It also specifically binds to its receptor SecA. The chain is Protein-export protein SecB from Thiobacillus denitrificans (strain ATCC 25259 / T1).